A 667-amino-acid polypeptide reads, in one-letter code: DNA ligase (667 aa).

Residues 34–38 (DAEYD), 83–84 (SL), and Glu-113 contribute to the NAD(+) site. Lys-115 acts as the N6-AMP-lysine intermediate in catalysis. Residues Arg-136, Glu-170, Lys-286, and Lys-310 each coordinate NAD(+). The Zn(2+) site is built by Cys-404, Cys-407, Cys-422, and Cys-427. The BRCT domain maps to 589–667 (ATDSVLSGKT…EQQLEDVVGK (79 aa)).

It belongs to the NAD-dependent DNA ligase family. LigA subfamily. Mg(2+) is required as a cofactor. The cofactor is Mn(2+).

The catalysed reaction is NAD(+) + (deoxyribonucleotide)n-3'-hydroxyl + 5'-phospho-(deoxyribonucleotide)m = (deoxyribonucleotide)n+m + AMP + beta-nicotinamide D-nucleotide.. Its function is as follows. DNA ligase that catalyzes the formation of phosphodiester linkages between 5'-phosphoryl and 3'-hydroxyl groups in double-stranded DNA using NAD as a coenzyme and as the energy source for the reaction. It is essential for DNA replication and repair of damaged DNA. The protein is DNA ligase of Oceanobacillus iheyensis (strain DSM 14371 / CIP 107618 / JCM 11309 / KCTC 3954 / HTE831).